A 168-amino-acid chain; its full sequence is Crossover junction endodeoxyribonuclease RuvC (168 aa).

Active-site residues include Asp-9, Glu-70, and Asp-145. Mg(2+) is bound by residues Asp-9, Glu-70, and Asp-145.

The protein belongs to the RuvC family. Homodimer which binds Holliday junction (HJ) DNA. The HJ becomes 2-fold symmetrical on binding to RuvC with unstacked arms; it has a different conformation from HJ DNA in complex with RuvA. In the full resolvosome a probable DNA-RuvA(4)-RuvB(12)-RuvC(2) complex forms which resolves the HJ. It depends on Mg(2+) as a cofactor.

It is found in the cytoplasm. It carries out the reaction Endonucleolytic cleavage at a junction such as a reciprocal single-stranded crossover between two homologous DNA duplexes (Holliday junction).. Functionally, the RuvA-RuvB-RuvC complex processes Holliday junction (HJ) DNA during genetic recombination and DNA repair. Endonuclease that resolves HJ intermediates. Cleaves cruciform DNA by making single-stranded nicks across the HJ at symmetrical positions within the homologous arms, yielding a 5'-phosphate and a 3'-hydroxyl group; requires a central core of homology in the junction. The consensus cleavage sequence is 5'-(A/T)TT(C/G)-3'. Cleavage occurs on the 3'-side of the TT dinucleotide at the point of strand exchange. HJ branch migration catalyzed by RuvA-RuvB allows RuvC to scan DNA until it finds its consensus sequence, where it cleaves and resolves the cruciform DNA. In Chlamydia felis (strain Fe/C-56) (Chlamydophila felis), this protein is Crossover junction endodeoxyribonuclease RuvC.